The following is a 257-amino-acid chain: Imidazole glycerol phosphate synthase subunit HisF (257 aa).

Catalysis depends on residues Asp11 and Asp130.

Belongs to the HisA/HisF family. Heterodimer of HisH and HisF.

The protein resides in the cytoplasm. The catalysed reaction is 5-[(5-phospho-1-deoxy-D-ribulos-1-ylimino)methylamino]-1-(5-phospho-beta-D-ribosyl)imidazole-4-carboxamide + L-glutamine = D-erythro-1-(imidazol-4-yl)glycerol 3-phosphate + 5-amino-1-(5-phospho-beta-D-ribosyl)imidazole-4-carboxamide + L-glutamate + H(+). The protein operates within amino-acid biosynthesis; L-histidine biosynthesis; L-histidine from 5-phospho-alpha-D-ribose 1-diphosphate: step 5/9. Functionally, IGPS catalyzes the conversion of PRFAR and glutamine to IGP, AICAR and glutamate. The HisF subunit catalyzes the cyclization activity that produces IGP and AICAR from PRFAR using the ammonia provided by the HisH subunit. This is Imidazole glycerol phosphate synthase subunit HisF from Vibrio cholerae serotype O1 (strain ATCC 39541 / Classical Ogawa 395 / O395).